The sequence spans 101 residues: UPF0473 protein EF_1204 (101 aa).

This sequence belongs to the UPF0473 family.

The sequence is that of UPF0473 protein EF_1204 from Enterococcus faecalis (strain ATCC 700802 / V583).